The sequence spans 569 residues: Neutral leucine aminopeptidase, chloroplastic (569 aa).

Residues 1–48 (MNGVLCSSSSSFHSYPSIFTKFQSSPIWSFSISVTPLCSRRAKRMAHS) constitute a chloroplast transit peptide. Mn(2+)-binding residues include Lys-339 and Asp-344. Residue Lys-351 is part of the active site. Residues Asp-364, Asp-424, and Glu-426 each coordinate Mn(2+). Residue Arg-428 is part of the active site.

It belongs to the peptidase M17 family. Homohexamer (dimer of homotrimers). Requires Mn(2+) as cofactor. In terms of tissue distribution, expressed constitutively at low levels. Expressed in vegetative and reproductive organs, including leaves, stems, roots, cotyledons (after imbibition), pistils, sepals, petals, stamens, and floral buds (at protein level). Present at very low levels in healthy leaves.

It is found in the plastid. The protein resides in the chloroplast. The catalysed reaction is Release of an N-terminal amino acid, Xaa-|-Yaa-, in which Xaa is preferably Leu, but may be other amino acids including Pro although not Arg or Lys, and Yaa may be Pro. Amino acid amides and methyl esters are also readily hydrolyzed, but rates on arylamides are exceedingly low.. It carries out the reaction Release of N-terminal proline from a peptide.. Its function is as follows. Catalyzes the removal of unsubstituted N-terminal amino acids from various peptides. When associated as homohexamer, catalyzes the proteolyzes of Xaa-Leu dipeptides. Possesses leucine aminopeptidase activity against the model substrate leucine-amido methyl coumarin. Presumably involved in the processing and regular turnover of intracellular proteins. Functions as a molecular chaperone to protect proteins from heat-induced damage. The sequence is that of Neutral leucine aminopeptidase, chloroplastic from Solanum lycopersicum (Tomato).